The following is a 196-amino-acid chain: Ribonuclease HII (196 aa).

Positions 9 to 196 constitute an RNase H type-2 domain; it reads KLVAGVDEVG…KPVRHALGIE (188 aa). Residues D15, E16, and D107 each contribute to the a divalent metal cation site.

It belongs to the RNase HII family. The cofactor is Mn(2+). Mg(2+) serves as cofactor.

It localises to the cytoplasm. It catalyses the reaction Endonucleolytic cleavage to 5'-phosphomonoester.. Endonuclease that specifically degrades the RNA of RNA-DNA hybrids. This Aeromonas salmonicida (strain A449) protein is Ribonuclease HII.